The following is a 949-amino-acid chain: Coiled-coil domain-containing protein 66 (949 aa).

Thr-115 and Thr-121 each carry phosphothreonine. At Ser-369 the chain carries Phosphoserine. Positions Gln-474–Lys-558 form a coiled coil. Residues Gly-570–Phe-949 form a mediates localization to cilia, centrosomes and spindle microtubules and the interaction with PCM1, CEP290, CEP104 and CSPP1 region. A Phosphoserine modification is found at Ser-606. Disordered stretches follow at residues Gln-691–Ile-714 and Ser-789–Gln-809.

As to quaternary structure, homodimer; disulfide-linked. Interacts with CEP290. Interacts with PCM1. Interacts with ARMC9, TOGARAM1, CSPP1 and CEP104. Interacts with CDK5RAP2, CEP152, CEP192, TBG1 and PRC1.

It is found in the cytoplasm. Its subcellular location is the cytoskeleton. The protein localises to the microtubule organizing center. The protein resides in the centrosome. It localises to the centriolar satellite. It is found in the cell projection. Its subcellular location is the cilium. The protein localises to the cilium basal body. The protein resides in the cilium axoneme. It localises to the photoreceptor inner segment. It is found in the photoreceptor outer segment. In terms of biological role, microtubule-binding protein required for ciliogenesis. May function in ciliogenesis by mediating the transport of proteins like BBS4 to the cilium, but also through the organization of the centriolar satellites. Required for the assembly of signaling-competent cilia with proper structure and length. Mediates this function in part by regulating transition zone assembly and basal body recruitment of the IFT-B complex. Cooperates with the ciliopathy proteins CSPP1 and CEP104 during cilium length regulation. Plays two important roles during cell division. First, is required for mitotic progression via regulation of spindle assembly, organization and orientation, levels of spindle microtubules (MTs), kinetochore-fiber integrity, and chromosome alignment. Second, functions during cytokinesis in part by regulating assembly and organization of central spindle and midbody MTs Plays a role in retina morphogenesis and/or homeostasis. The polypeptide is Coiled-coil domain-containing protein 66 (Pongo abelii (Sumatran orangutan)).